The sequence spans 206 residues: Protein-methionine-sulfoxide reductase heme-binding subunit MsrQ (206 aa).

A run of 5 helical transmembrane segments spans residues 13-33 (IAIW…INLG), 79-99 (LLGL…SILE), 116-136 (PYLT…LTST), 147-167 (WQKL…HYLW), and 169-189 (VKTL…LLLL).

It belongs to the MsrQ family. As to quaternary structure, heterodimer of a catalytic subunit (MsrP) and a heme-binding subunit (MsrQ). Requires FMN as cofactor. Heme b serves as cofactor.

The protein localises to the cell inner membrane. Functionally, part of the MsrPQ system that repairs oxidized periplasmic proteins containing methionine sulfoxide residues (Met-O), using respiratory chain electrons. Thus protects these proteins from oxidative-stress damage caused by reactive species of oxygen and chlorine generated by the host defense mechanisms. MsrPQ is essential for the maintenance of envelope integrity under bleach stress, rescuing a wide series of structurally unrelated periplasmic proteins from methionine oxidation. MsrQ provides electrons for reduction to the reductase catalytic subunit MsrP, using the quinone pool of the respiratory chain. This is Protein-methionine-sulfoxide reductase heme-binding subunit MsrQ from Yersinia pestis bv. Antiqua (strain Antiqua).